The following is a 172-amino-acid chain: MSRTIVALILLGLAALAAADHHEGHGAEKEWAGKAWLGKWVSTDRSENWDAFVEALGLPLAAYGGNHKTVHKLWKEGDHYHHQIIIADKSYKQDIQFKLGEEGRTAHNGTEVTFKYTEVGDNLQNEVKIPSKNKTISDSYVVKGDELEKTYKINDVVAKRWYKKHAHEPSTA.

A signal peptide spans methionine 1 to alanine 19. An SAHS-c1 region spans residues glutamate 30–proline 59. Residues tryptophan 74–glutamate 102 are SAHS-c2. N-linked (GlcNAc...) asparagine glycans are attached at residues asparagine 108 and asparagine 133. Residues lysine 115–lysine 164 form an SAHS-c3 region.

Belongs to the Secretory-abundant heat soluble protein (SAHS) family.

The protein resides in the secreted. Functionally, secreted heat soluble protein acting as a molecular shield in water-deficient condition. Tardigrade-specific intrinsically disordered proteins (TDPs) are essential for desiccation tolerance by forming non-crystalline amorphous solids upon desiccation, and this vitrified state mirrors their protective capabilities. The polypeptide is Secretory-abundant heat soluble protein 64681 (Hypsibius exemplaris (Freshwater tardigrade)).